The primary structure comprises 365 residues: Aminomethyltransferase (365 aa).

It belongs to the GcvT family. In terms of assembly, the glycine cleavage system is composed of four proteins: P, T, L and H.

It carries out the reaction N(6)-[(R)-S(8)-aminomethyldihydrolipoyl]-L-lysyl-[protein] + (6S)-5,6,7,8-tetrahydrofolate = N(6)-[(R)-dihydrolipoyl]-L-lysyl-[protein] + (6R)-5,10-methylene-5,6,7,8-tetrahydrofolate + NH4(+). Functionally, the glycine cleavage system catalyzes the degradation of glycine. This Yersinia pseudotuberculosis serotype O:1b (strain IP 31758) protein is Aminomethyltransferase.